The chain runs to 346 residues: Uroporphyrinogen decarboxylase (346 aa).

Substrate-binding positions include 26–30 (RQAGR), Asp-76, Tyr-153, Ser-208, and His-323.

This sequence belongs to the uroporphyrinogen decarboxylase family. As to quaternary structure, homodimer.

It is found in the cytoplasm. It catalyses the reaction uroporphyrinogen III + 4 H(+) = coproporphyrinogen III + 4 CO2. The protein operates within porphyrin-containing compound metabolism; protoporphyrin-IX biosynthesis; coproporphyrinogen-III from 5-aminolevulinate: step 4/4. In terms of biological role, catalyzes the decarboxylation of four acetate groups of uroporphyrinogen-III to yield coproporphyrinogen-III. In Prochlorococcus marinus (strain AS9601), this protein is Uroporphyrinogen decarboxylase.